Reading from the N-terminus, the 228-residue chain is Heptaprenylglyceryl phosphate synthase (228 aa).

Lysine 12 provides a ligand contact to sn-glycerol 1-phosphate. 2 residues coordinate Mg(2+): aspartate 14 and serine 40. Sn-glycerol 1-phosphate is bound by residues 158–163 (YLEYSG), glycine 188, and 208–209 (GN).

The protein belongs to the GGGP/HepGP synthase family. Group I subfamily. Homodimer. Mg(2+) is required as a cofactor.

The catalysed reaction is sn-glycerol 1-phosphate + all-trans-heptaprenyl diphosphate = 3-heptaprenyl-sn-glycero-1-phosphate + diphosphate. The protein operates within membrane lipid metabolism; glycerophospholipid metabolism. Its function is as follows. Prenyltransferase that catalyzes in vivo the transfer of the heptaprenyl moiety of heptaprenyl pyrophosphate (HepPP; 35 carbon atoms) to the C3 hydroxyl of sn-glycerol-1-phosphate (G1P), producing heptaprenylglyceryl phosphate (HepGP). This reaction is an ether-bond-formation step in the biosynthesis of archaea-type G1P-based membrane lipids found in Bacillales. To a much lesser extent, is also able to use geranyl diphosphate (GPP; C10) and geranylgeranyl diphosphate (GGPP; C20) as the prenyl donors, but not farnesyl pyrophosphate (FPP; C15). Cannot use glycerol-3-phosphate (G3P) or 3-phosphoglycerate (3PG) as an acceptor. This chain is Heptaprenylglyceryl phosphate synthase, found in Bacillus subtilis (strain 168).